We begin with the raw amino-acid sequence, 167 residues long: S-ribosylhomocysteine lyase (167 aa).

Fe cation-binding residues include histidine 54, histidine 58, and cysteine 128.

It belongs to the LuxS family. In terms of assembly, homodimer. Fe cation is required as a cofactor.

The catalysed reaction is S-(5-deoxy-D-ribos-5-yl)-L-homocysteine = (S)-4,5-dihydroxypentane-2,3-dione + L-homocysteine. Functionally, involved in the synthesis of autoinducer 2 (AI-2) which is secreted by bacteria and is used to communicate both the cell density and the metabolic potential of the environment. The regulation of gene expression in response to changes in cell density is called quorum sensing. Catalyzes the transformation of S-ribosylhomocysteine (RHC) to homocysteine (HC) and 4,5-dihydroxy-2,3-pentadione (DPD). The chain is S-ribosylhomocysteine lyase from Haemophilus influenzae (strain 86-028NP).